The chain runs to 409 residues: Spermatogenesis-associated protein 2-like protein (409 aa).

Disordered regions lie at residues 233-257 (EDEG…TSEL), 270-299 (LWGA…PQPE), and 313-337 (RPGD…IPEP).

Belongs to the SPATA2 family.

The chain is Spermatogenesis-associated protein 2-like protein (SPATA2L) from Bos taurus (Bovine).